A 455-amino-acid chain; its full sequence is Protein king tubby (455 aa).

The interval 35-92 (RPMSGMRGNSRELHAYDGPMQFIGSPHNPDQILSNNSSSVHLSSSMNSSRNNSNNLRS) is disordered. A compositionally biased stretch (low complexity) spans 67–92 (LSNNSSSVHLSSSMNSSRNNSNNLRS). Residue Ser144 is modified to Phosphoserine.

It belongs to the TUB family.

The protein resides in the cytoplasm. It is found in the nucleus. The protein localises to the cell projection. Its subcellular location is the cilium membrane. It localises to the rhabdomere. The polypeptide is Protein king tubby (Drosophila virilis (Fruit fly)).